A 337-amino-acid polypeptide reads, in one-letter code: Ribosomal RNA small subunit methyltransferase C (337 aa).

This sequence belongs to the methyltransferase superfamily. RsmC family. Monomer.

It localises to the cytoplasm. It catalyses the reaction guanosine(1207) in 16S rRNA + S-adenosyl-L-methionine = N(2)-methylguanosine(1207) in 16S rRNA + S-adenosyl-L-homocysteine + H(+). Its function is as follows. Specifically methylates the guanine in position 1207 of 16S rRNA in the 30S particle. In Acinetobacter baumannii (strain AB307-0294), this protein is Ribosomal RNA small subunit methyltransferase C.